A 277-amino-acid polypeptide reads, in one-letter code: MVSELSLPEFEAGLSASLTCKRNFACFATFAGEIIGALRGSRLRVQLLEDFSTIGKDSVLSGELQVLVLATMQELPPREQNEVARWLRALRKVHPGLVCIATIGAHENGGPGMTNFLRRQFWFATRGPKRACGALRLPKRAAFTVHPAVHRYVLDVLVHIRMHRLLDHSQAGGASSSSAEDVLDLCRWLCSANHPEKTFVTPDDVQQACAWYFPMHLDVIRLPQQEASVLYGTSMKFAEDLLIGLRTFLKKTGTVDNPLLLETLIVQEVLGKVVPAI.

The protein belongs to the MTC2 family.

Functionally, may be involved in telomere capping. This is Maintenance of telomere capping protein 2 (MTC2) from Eremothecium gossypii (strain ATCC 10895 / CBS 109.51 / FGSC 9923 / NRRL Y-1056) (Yeast).